Here is a 173-residue protein sequence, read N- to C-terminus: MANPVQPQLQDPGSTSPLDLPEMEKLLTKVENKDDQALNLSKSLSGALDLEQNGHSLPFKVISEGHRQPSLSGSPSRASSRRASSVVTTSYAQDQEAPKDYLVLAIASCFCPVWPLNLIPLIFSIMSRSSVQQGDLDGARRLGRLARLLSITFIILGIVIIIVAVTVNFTVPK.

Positions 1–17 (MANPVQPQLQDPGSTSP) are enriched in polar residues. Residues 1 to 22 (MANPVQPQLQDPGSTSPLDLPE) form a disordered region. Over 1-102 (MANPVQPQLQ…QDQEAPKDYL (102 aa)) the chain is Cytoplasmic. Residues S16, S43, S45, S70, S84, and S85 each carry the phosphoserine modification. Positions 103–123 (VLAIASCFCPVWPLNLIPLIF) form an intramembrane region, helical. Residues 124-150 (SIMSRSSVQQGDLDGARRLGRLARLLS) are Cytoplasmic-facing. Residues 151-171 (ITFIILGIVIIIVAVTVNFTV) form a helical membrane-spanning segment. The Extracellular portion of the chain corresponds to 172 to 173 (PK).

This sequence belongs to the CD225/Dispanin family. As to quaternary structure, interacts with SLC2A4; the interaction is required for proper SLC2A4 reacycling after insulin stimulation. In terms of tissue distribution, present in adipose tissue and undetectable in other tissues (at protein level).

The protein resides in the cell membrane. It is found in the endomembrane system. It localises to the cytoplasm. The protein localises to the perinuclear region. In terms of biological role, regulates insulin-mediated adipose tissue glucose uptake and transport by modulation of SLC2A4 recycling. Not required for SLC2A4 membrane fusion upon an initial stimulus, but rather is necessary for proper protein recycling during prolonged insulin stimulation. This is Trafficking regulator of GLUT4 1 from Rattus norvegicus (Rat).